A 65-amino-acid chain; its full sequence is Large ribosomal subunit protein uL29 (65 aa).

Positions 30–49 are disordered; that stretch reads ERSSVAMGGAPSSPGKMRSI.

It belongs to the universal ribosomal protein uL29 family.

The protein is Large ribosomal subunit protein uL29 of Picrophilus torridus (strain ATCC 700027 / DSM 9790 / JCM 10055 / NBRC 100828 / KAW 2/3).